We begin with the raw amino-acid sequence, 66 residues long: Large ribosomal subunit protein bL33c (66 aa).

This sequence belongs to the bacterial ribosomal protein bL33 family.

Its subcellular location is the plastid. It is found in the chloroplast. This chain is Large ribosomal subunit protein bL33c, found in Drimys granadensis.